The following is a 44-amino-acid chain: Cytochrome b559 subunit beta (44 aa).

The chain crosses the membrane as a helical span at residues 19 to 35; the sequence is WLAIHGIAIPTVFFLGA. H23 is a binding site for heme.

Belongs to the PsbE/PsbF family. Heterodimer of an alpha subunit and a beta subunit. PSII is composed of 1 copy each of membrane proteins PsbA, PsbB, PsbC, PsbD, PsbE, PsbF, PsbH, PsbI, PsbJ, PsbK, PsbL, PsbM, PsbT, PsbX, PsbY, PsbZ, Psb30/Ycf12, at least 3 peripheral proteins of the oxygen-evolving complex and a large number of cofactors. It forms dimeric complexes. It depends on heme b as a cofactor.

It localises to the plastid. It is found in the chloroplast thylakoid membrane. Its function is as follows. This b-type cytochrome is tightly associated with the reaction center of photosystem II (PSII). PSII is a light-driven water:plastoquinone oxidoreductase that uses light energy to abstract electrons from H(2)O, generating O(2) and a proton gradient subsequently used for ATP formation. It consists of a core antenna complex that captures photons, and an electron transfer chain that converts photonic excitation into a charge separation. The polypeptide is Cytochrome b559 subunit beta (Gracilaria tenuistipitata var. liui (Red alga)).